Reading from the N-terminus, the 536-residue chain is C-22 sterol desaturase ERG5A (536 aa).

A helical transmembrane segment spans residues 41 to 61; the sequence is VWTWVFTLVALCIAYDQIAYI. Cys481 serves as a coordination point for heme.

Belongs to the cytochrome P450 family. Heme serves as cofactor.

It localises to the endoplasmic reticulum membrane. It catalyses the reaction 5-dehydroepisterol + NADPH + O2 + H(+) = ergosta-5,7,22,24(28)-tetraen-3beta-ol + NADP(+) + 2 H2O. The protein operates within steroid metabolism; ergosterol biosynthesis. Functionally, C-22 sterol desaturase; part of the third module of ergosterol biosynthesis pathway that includes the late steps of the pathway. ERG5A and ERG5B convert 5-dehydroepisterol into ergosta-5,7,22,24(28)-tetraen-3beta-ol by forming the C-22(23) double bond in the sterol side chain. The third module or late pathway involves the ergosterol synthesis itself through consecutive reactions that mainly occur in the endoplasmic reticulum (ER) membrane. Firstly, the squalene synthase ERG9 catalyzes the condensation of 2 farnesyl pyrophosphate moieties to form squalene, which is the precursor of all steroids. Squalene synthase is crucial for balancing the incorporation of farnesyl diphosphate (FPP) into sterol and nonsterol isoprene synthesis. Secondly, squalene is converted into lanosterol by the consecutive action of the squalene epoxidase ERG1 and the lanosterol synthase ERG7. Then, the delta(24)-sterol C-methyltransferase ERG6 methylates lanosterol at C-24 to produce eburicol. Eburicol is the substrate of the sterol 14-alpha demethylase encoded by CYP51A, CYP51B and CYP51C, to yield 4,4,24-trimethyl ergosta-8,14,24(28)-trienol. CYP51B encodes the enzyme primarily responsible for sterol 14-alpha-demethylation, and plays an essential role in ascospore formation. CYP51A encodes an additional sterol 14-alpha-demethylase, induced on ergosterol depletion and responsible for the intrinsic variation in azole sensitivity. The third CYP51 isoform, CYP51C, does not encode a sterol 14-alpha-demethylase, but is required for full virulence on host wheat ears. The C-14 reductase ERG24 then reduces the C14=C15 double bond which leads to 4,4-dimethylfecosterol. A sequence of further demethylations at C-4, involving the C-4 demethylation complex containing the C-4 methylsterol oxidases ERG25, the sterol-4-alpha-carboxylate 3-dehydrogenase ERG26 and the 3-keto-steroid reductase ERG27, leads to the production of fecosterol via 4-methylfecosterol. ERG28 has a role as a scaffold to help anchor ERG25, ERG26 and ERG27 to the endoplasmic reticulum. The C-8 sterol isomerase ERG2 then catalyzes the reaction which results in unsaturation at C-7 in the B ring of sterols and thus converts fecosterol to episterol. The sterol-C5-desaturases ERG3A and ERG3BB then catalyze the introduction of a C-5 double bond in the B ring to produce 5-dehydroepisterol. The C-22 sterol desaturases ERG5A and ERG5B further convert 5-dehydroepisterol into ergosta-5,7,22,24(28)-tetraen-3beta-ol by forming the C-22(23) double bond in the sterol side chain. Finally, ergosta-5,7,22,24(28)-tetraen-3beta-ol is substrate of the C-24(28) sterol reductase ERG4 to produce ergosterol. The protein is C-22 sterol desaturase ERG5A of Gibberella zeae (strain ATCC MYA-4620 / CBS 123657 / FGSC 9075 / NRRL 31084 / PH-1) (Wheat head blight fungus).